A 499-amino-acid chain; its full sequence is Isoflavone 2'-hydroxylase (499 aa).

A heme-binding site is contributed by cysteine 436.

Belongs to the cytochrome P450 family. Requires heme as cofactor.

Its subcellular location is the membrane. It catalyses the reaction a 2'-unsubstituted isoflavone + reduced [NADPH--hemoprotein reductase] + O2 = a 2'-hydroxyisoflavone + oxidized [NADPH--hemoprotein reductase] + H2O + H(+). Catalyzes the hydroxylation of isoflavones, daidzein and formononetin, to yield 2'-hydroxyisoflavones, 2'-hydroxydaidzein, and 2'-hydroxyformononetin, respectively. In Glycyrrhiza echinata (Licorice), this protein is Isoflavone 2'-hydroxylase (CYP81E1).